Consider the following 469-residue polypeptide: Gustatory receptor for sugar taste 64f (469 aa).

The Cytoplasmic segment spans residues 1 to 117 (MKILPKLERK…SFSWRNIRTC (117 aa)). Residues 118-138 (FSLLFIASSLANFGLSLFKVL) traverse the membrane as a helical segment. At 139–146 (NNPISFNS) the chain is on the extracellular side. Residues 147 to 167 (IKPIIFRGSVLLVLIVALNLA) form a helical membrane-spanning segment. The Cytoplasmic portion of the chain corresponds to 168–199 (RQWPQLMMYWHTVEKDLPQYKTQLTKWKMGHT). The chain crosses the membrane as a helical span at residues 200-220 (ISMVMLLGMMLSFAEHILSMV). The Extracellular segment spans residues 221-265 (SAINYASFCNRTADPIQNYFLRTNDEIFFVTSYSTTLALWGKFQN). N-linked (GlcNAc...) asparagine glycosylation is present at asparagine 230. Residues 266–286 (VFSTFIWNYMDLFVMIVSIGL) traverse the membrane as a helical segment. The Cytoplasmic portion of the chain corresponds to 287-330 (ASKFRQLNDDLRNFKGMNMAPSYWSERRIQYRNICILCDKMDDA). A helical membrane pass occupies residues 331-351 (ISLITMVSFSNNLYFICVQLL). At 352 to 353 (RS) the chain is on the extracellular side. The chain crosses the membrane as a helical span at residues 354-374 (LNTMPSVAHAVYFYFSLIFLI). Residues 375–435 (GRTLAVSLYS…GMKFFHLTRK (61 aa)) are Cytoplasmic-facing. The chain crosses the membrane as a helical span at residues 436–456 (LVLSVAGTIVTYELVLIQFHE). The Extracellular segment spans residues 457–469 (DNDLWDCDQSYYS).

This sequence belongs to the insect chemoreceptor superfamily. Gustatory receptor (GR) family. Gr5a subfamily. As to expression, expressed in Gr5a-expressing sugar-sensing cells.

It localises to the cell membrane. In terms of biological role, one of the few identified sugar gustatory receptors identified so far and which promotes the starvation-induced increase of feeding motivation. Required in combination with Gr64a to detect sucrose, maltose, and glucose. In Drosophila melanogaster (Fruit fly), this protein is Gustatory receptor for sugar taste 64f (Gr64f).